The sequence spans 100 residues: uncharacterized protein (100 aa).

This is an uncharacterized protein from Saccharomyces cerevisiae (strain ATCC 204508 / S288c) (Baker's yeast).